A 116-amino-acid chain; its full sequence is Mercuric transport protein MerT (116 aa).

2 consecutive transmembrane segments (helical) span residues 16-36 and 46-66; these read LAAI…ALGF and VLEP…FFAW. Positions 24 and 25 each coordinate Hg(2+). Residues cysteine 76 and cysteine 82 each coordinate Hg(2+). A helical transmembrane segment spans residues 94–114; the sequence is IFWGVAVLVLVALGFPYVVPF.

Belongs to the MerT family.

The protein resides in the cell inner membrane. Functionally, involved in mercury resistance. Probably transfers a mercuric ion from the periplasmic Hg(2+)-binding protein MerP to the cytoplasmic mercuric reductase MerA. The polypeptide is Mercuric transport protein MerT (Pseudomonas fluorescens).